Here is a 643-residue protein sequence, read N- to C-terminus: Phosphoenolpyruvate carboxykinase [GTP] (643 aa).

Substrate contacts are provided by residues Arg102 and 253 to 255; that span reads YGG. Mn(2+) is bound by residues Lys262 and His282. Substrate is bound at residue Ser304. 305–310 lines the GTP pocket; sequence ACGKTN. The active site involves Cys306. Mn(2+) is bound at residue Asp329. 422–424 contributes to the substrate binding site; sequence NSR. GTP contacts are provided by residues Arg424, Arg455, and 548 to 551; that span reads YGDN.

Belongs to the phosphoenolpyruvate carboxykinase [GTP] family. As to quaternary structure, monomer. It depends on Mn(2+) as a cofactor.

The enzyme catalyses oxaloacetate + GTP = phosphoenolpyruvate + GDP + CO2. Functionally, in parasitic nematodes PEPCK carboxylates phosphoenolpyruvate to oxaloacetate thus introducing the products of glycolysis to mitochondrial metabolism. In terms of biological role, catalyzes the conversion of oxaloacetate (OAA) to phosphoenolpyruvate (PEP), the rate-limiting step in the metabolic pathway that produces glucose from lactate and other precursors derived from the citric acid cycle. This chain is Phosphoenolpyruvate carboxykinase [GTP] (PEPCK), found in Ascaris suum (Pig roundworm).